Consider the following 78-residue polypeptide: Putative defensin-like protein 133 (78 aa).

An N-terminal signal peptide occupies residues 1–24 (MKRSFLLLLTILTIFIILGQGVMG). Intrachain disulfides connect C34/C75, C44/C68, C49/C72, and C53/C74.

The protein belongs to the DEFL family.

It is found in the secreted. This Arabidopsis thaliana (Mouse-ear cress) protein is Putative defensin-like protein 133 (LCR33).